Consider the following 389-residue polypeptide: Glutamate 5-kinase (389 aa).

Lys16 provides a ligand contact to ATP. Ser56, Asp143, and Asn155 together coordinate substrate. 175-176 (SD) serves as a coordination point for ATP. The PUA domain maps to 281-358 (AGELHVDDGA…AEIETILGYP (78 aa)).

This sequence belongs to the glutamate 5-kinase family.

Its subcellular location is the cytoplasm. The enzyme catalyses L-glutamate + ATP = L-glutamyl 5-phosphate + ADP. It participates in amino-acid biosynthesis; L-proline biosynthesis; L-glutamate 5-semialdehyde from L-glutamate: step 1/2. Functionally, catalyzes the transfer of a phosphate group to glutamate to form L-glutamate 5-phosphate. This Rhizobium johnstonii (strain DSM 114642 / LMG 32736 / 3841) (Rhizobium leguminosarum bv. viciae) protein is Glutamate 5-kinase.